A 165-amino-acid polypeptide reads, in one-letter code: Growth arrest and DNA damage-inducible protein GADD45 alpha (165 aa).

Phosphothreonine is present on threonine 2.

Belongs to the GADD45 family. In terms of assembly, interacts with AURKA, PCNA, GADD45GIP1 and MAPK14.

It localises to the nucleus. Its function is as follows. Might affect PCNA interaction with some CDK (cell division protein kinase) complexes; stimulates DNA excision repair in vitro and inhibits entry of cells into S phase. In T-cells, functions as a regulator of p38 MAPKs by inhibiting p88 phosphorylation and activity. The polypeptide is Growth arrest and DNA damage-inducible protein GADD45 alpha (Gadd45a) (Rattus norvegicus (Rat)).